The primary structure comprises 182 residues: Ribosome maturation factor RimM (182 aa).

In terms of domain architecture, PRC barrel spans 102–182; that stretch reads GEGDYYWKDL…TIEVDWDPGF (81 aa).

This sequence belongs to the RimM family. As to quaternary structure, binds ribosomal protein uS19.

It is found in the cytoplasm. An accessory protein needed during the final step in the assembly of 30S ribosomal subunit, possibly for assembly of the head region. Essential for efficient processing of 16S rRNA. May be needed both before and after RbfA during the maturation of 16S rRNA. It has affinity for free ribosomal 30S subunits but not for 70S ribosomes. In Pectobacterium carotovorum subsp. carotovorum (strain PC1), this protein is Ribosome maturation factor RimM.